Here is a 354-residue protein sequence, read N- to C-terminus: Uroporphyrinogen decarboxylase (354 aa).

Residues Arg-25 to Arg-29, Phe-44, Asp-75, Tyr-152, Thr-207, and His-330 each bind substrate.

This sequence belongs to the uroporphyrinogen decarboxylase family. Homodimer.

The protein resides in the cytoplasm. The catalysed reaction is uroporphyrinogen III + 4 H(+) = coproporphyrinogen III + 4 CO2. It participates in porphyrin-containing compound metabolism; protoporphyrin-IX biosynthesis; coproporphyrinogen-III from 5-aminolevulinate: step 4/4. Its function is as follows. Catalyzes the decarboxylation of four acetate groups of uroporphyrinogen-III to yield coproporphyrinogen-III. The polypeptide is Uroporphyrinogen decarboxylase (Xylella fastidiosa (strain Temecula1 / ATCC 700964)).